A 313-amino-acid chain; its full sequence is Porphobilinogen deaminase (313 aa).

Cys-242 is subject to S-(dipyrrolylmethanemethyl)cysteine.

This sequence belongs to the HMBS family. As to quaternary structure, monomer. Dipyrromethane serves as cofactor.

The enzyme catalyses 4 porphobilinogen + H2O = hydroxymethylbilane + 4 NH4(+). It participates in porphyrin-containing compound metabolism; protoporphyrin-IX biosynthesis; coproporphyrinogen-III from 5-aminolevulinate: step 2/4. Tetrapolymerization of the monopyrrole PBG into the hydroxymethylbilane pre-uroporphyrinogen in several discrete steps. The polypeptide is Porphobilinogen deaminase (Escherichia coli O7:K1 (strain IAI39 / ExPEC)).